We begin with the raw amino-acid sequence, 680 residues long: DNA-directed RNA polymerase subunit beta' (680 aa).

Residues Cys69, Cys71, Cys87, and Cys90 each coordinate Zn(2+). Residues Asp489, Asp491, and Asp493 each coordinate Mg(2+).

Belongs to the RNA polymerase beta' chain family. RpoC1 subfamily. In plastids the minimal PEP RNA polymerase catalytic core is composed of four subunits: alpha, beta, beta', and beta''. When a (nuclear-encoded) sigma factor is associated with the core the holoenzyme is formed, which can initiate transcription. Mg(2+) is required as a cofactor. Zn(2+) serves as cofactor.

Its subcellular location is the plastid. The protein localises to the chloroplast. It carries out the reaction RNA(n) + a ribonucleoside 5'-triphosphate = RNA(n+1) + diphosphate. In terms of biological role, DNA-dependent RNA polymerase catalyzes the transcription of DNA into RNA using the four ribonucleoside triphosphates as substrates. The sequence is that of DNA-directed RNA polymerase subunit beta' from Arabis hirsuta (Hairy rock-cress).